We begin with the raw amino-acid sequence, 63 residues long: 2-hydroxymuconate tautomerase (63 aa).

The Proton acceptor; via imino nitrogen role is filled by Pro2.

It belongs to the 4-oxalocrotonate tautomerase family. As to quaternary structure, homohexamer.

It carries out the reaction (2Z,4E)-2-hydroxyhexa-2,4-dienedioate = (3E)-2-oxohex-3-enedioate. It participates in aromatic compound metabolism; salicylate degradation. Functionally, catalyzes the ketonization of 2-hydroxymuconate stereoselectively to yield 2-oxo-3-hexenedioate. The polypeptide is 2-hydroxymuconate tautomerase (nahJ) (Stutzerimonas stutzeri (Pseudomonas stutzeri)).